The primary structure comprises 335 residues: Large ribosomal subunit protein uL3 (335 aa).

The disordered stretch occupies residues 1 to 20; that stretch reads MATIHRPRRGSLAFSPRKRA.

It belongs to the universal ribosomal protein uL3 family. Part of the 50S ribosomal subunit. Forms a cluster with proteins L14 and L24e.

One of the primary rRNA binding proteins, it binds directly near the 3'-end of the 23S rRNA, where it nucleates assembly of the 50S subunit. This Methanothrix harundinacea (strain 6Ac) (Methanosaeta harundinacea) protein is Large ribosomal subunit protein uL3 (rpl3).